A 638-amino-acid chain; its full sequence is MPIITLPDGSKKVFEKSVTILEIAQSIGAGLAKATIAGRVNDVLLDATIPINKDSKVVIITSKDKEGIEIIRHSFAHLIGHAVKQIYSDIKMAIGPVIEDGFYYDIFSEYRFTPEDLIKIENRINKLIKTNYDVEILQVSKEEAIKTFKERDETFKLRIIEEIPEEGLINLYKHEEYIDMCRGPHVPNTRHLRHFKLLKLSGSYWRGNSENESLQRIYGTAWAKEKELKDYLTRIEEAEKRDHRKLGKKHSLFHIQEESPGMIFWHPNGWTIYQVLEKYIREILKKNDYLEIKTPQAVDKSLWEKSGHWEKFRDDMFTTASENRTYAIKPMNCPCHIQVFNQGLKSYKDLPIRLAEFGSCHRNEPSGALHGLMRVRNFTQDDAHIFCTEEQIQEEVSTFIDLVFEVYKTFGFDEIIIKLSTRPEKRVGSEDIWDKSEEALTKALDNKNLKWELQPGEGAFYGPKIEFSLKDCLSRVWQCGTIQVDFSMPIRLDATYVDIDNEKRNPVMLHRAILGSFERFIGILIEQYEAKFPIWLAPYQIILLSITDRNIEKCLKFNELINNNGYRSKVDIRNEKIGYKIREATLGRVPLIAVIGDKEEEIDSVALRALNGKNLGIFNLPNLFKLMDELIEKKGRTE.

Positions 1 to 61 constitute a TGS domain; sequence MPIITLPDGS…NKDSKVVIIT (61 aa). The interval 242 to 533 is catalytic; sequence DHRKLGKKHS…LIEQYEAKFP (292 aa). Zn(2+) contacts are provided by C333, H384, and H510.

This sequence belongs to the class-II aminoacyl-tRNA synthetase family. In terms of assembly, homodimer. It depends on Zn(2+) as a cofactor.

Its subcellular location is the cytoplasm. The enzyme catalyses tRNA(Thr) + L-threonine + ATP = L-threonyl-tRNA(Thr) + AMP + diphosphate + H(+). In terms of biological role, catalyzes the attachment of threonine to tRNA(Thr) in a two-step reaction: L-threonine is first activated by ATP to form Thr-AMP and then transferred to the acceptor end of tRNA(Thr). Also edits incorrectly charged L-seryl-tRNA(Thr). In Prochlorococcus marinus (strain MIT 9301), this protein is Threonine--tRNA ligase.